The following is a 271-amino-acid chain: Glutamate racemase (271 aa).

Substrate contacts are provided by residues 10-11 (DS) and 42-43 (YG). Cys73 acts as the Proton donor/acceptor in catalysis. 74-75 (NT) contacts substrate. The active-site Proton donor/acceptor is the Cys183. Position 184-185 (184-185 (TH)) interacts with substrate.

The protein belongs to the aspartate/glutamate racemases family.

It carries out the reaction L-glutamate = D-glutamate. It functions in the pathway cell wall biogenesis; peptidoglycan biosynthesis. Functionally, provides the (R)-glutamate required for cell wall biosynthesis. This Lactococcus lactis subsp. cremoris (strain MG1363) protein is Glutamate racemase.